The following is a 135-amino-acid chain: Thioredoxin H5 (135 aa).

The Thioredoxin domain maps to 13-128; it reads EHLDYSGGNV…LQEKFEQLNR (116 aa). Catalysis depends on nucleophile residues cysteine 54 and cysteine 57. Cysteines 54 and 57 form a disulfide.

This sequence belongs to the thioredoxin family. Plant H-type subfamily.

The protein resides in the cytoplasm. In terms of biological role, probable thiol-disulfide oxidoreductase that may be involved in the redox regulation of a number of cytosolic enzymes. The polypeptide is Thioredoxin H5 (Oryza sativa subsp. japonica (Rice)).